The primary structure comprises 103 residues: Protein translation factor SUI1 homolog (103 aa).

It belongs to the SUI1 family.

This chain is Protein translation factor SUI1 homolog, found in Methanocaldococcus jannaschii (strain ATCC 43067 / DSM 2661 / JAL-1 / JCM 10045 / NBRC 100440) (Methanococcus jannaschii).